Consider the following 58-residue polypeptide: Large ribosomal subunit protein uL30 (58 aa).

This sequence belongs to the universal ribosomal protein uL30 family. In terms of assembly, part of the 50S ribosomal subunit.

The polypeptide is Large ribosomal subunit protein uL30 (Acinetobacter baylyi (strain ATCC 33305 / BD413 / ADP1)).